The primary structure comprises 343 residues: Pyridoxal 5'-phosphate synthase subunit PDX1 (343 aa).

D73 contributes to the D-ribose 5-phosphate binding site. The active-site Schiff-base intermediate with D-ribose 5-phosphate is K130. G202 is a D-ribose 5-phosphate binding site. Residue Q214 coordinates D-glyceraldehyde 3-phosphate. D-ribose 5-phosphate is bound by residues G263 and 284–285; that span reads GS.

Belongs to the PdxS/SNZ family.

It catalyses the reaction aldehydo-D-ribose 5-phosphate + D-glyceraldehyde 3-phosphate + L-glutamine = pyridoxal 5'-phosphate + L-glutamate + phosphate + 3 H2O + H(+). The protein operates within cofactor biosynthesis; pyridoxal 5'-phosphate biosynthesis. In terms of biological role, catalyzes the formation of pyridoxal 5'-phosphate from ribose 5-phosphate (RBP), glyceraldehyde 3-phosphate (G3P) and ammonia. The ammonia is provided by PDX2. Can also use ribulose 5-phosphate and dihydroxyacetone phosphate as substrates, resulting from enzyme-catalyzed isomerization of RBP and G3P, respectively. Also plays an indirect role in resistance to singlet oxygen-generating photosensitizers. The chain is Pyridoxal 5'-phosphate synthase subunit PDX1 (PDX1) from Cercospora nicotianae (Barn spot disease fungus).